Reading from the N-terminus, the 329-residue chain is Cytosolic arginine sensor for mTORC1 subunit 2 (329 aa).

ACT domains are found at residues 72 to 140 (ADAT…HTLS) and 262 to 322 (ELWK…HALK).

Belongs to the GATS family. In terms of assembly, forms homodimers and heterodimers with CASTOR1. Interacts with the GATOR2 complex which is composed of MIOS, SEC13, SEH1L, WDR24 and WDR59; the interaction is not regulated by arginine.

The protein localises to the cytoplasm. The protein resides in the cytosol. Functionally, functions as a negative regulator of the TORC1 signaling pathway through the GATOR complex. As part of homodimers or heterodimers with CASTOR1, directly binds and inhibits the GATOR subcomplex GATOR2 and thereby mTORC1. Does not directly bind arginine, but binding of arginine to CASTOR1 disrupts the interaction of CASTOR2-containing heterodimers with GATOR2 which can in turn activate mTORC1 and the TORC1 signaling pathway. The protein is Cytosolic arginine sensor for mTORC1 subunit 2 of Mus musculus (Mouse).